A 247-amino-acid polypeptide reads, in one-letter code: Probable transcriptional regulatory protein GTNG_2524 (247 aa).

The segment covering 1–14 (MAGHSKWKNIQRRK) has biased composition (basic residues). Positions 1–21 (MAGHSKWKNIQRRKNAQDAKR) are disordered.

Belongs to the TACO1 family.

It localises to the cytoplasm. In Geobacillus thermodenitrificans (strain NG80-2), this protein is Probable transcriptional regulatory protein GTNG_2524.